The chain runs to 239 residues: Purine nucleoside phosphorylase DeoD-type (239 aa).

A purine D-ribonucleoside is bound at residue H5. Residues G21, R25, R44, and 88 to 91 (RVGS) contribute to the phosphate site. Residues 180–182 (EME) and 204–205 (SD) each bind a purine D-ribonucleoside. The Proton donor role is filled by D205.

This sequence belongs to the PNP/UDP phosphorylase family. As to quaternary structure, homohexamer; trimer of homodimers.

It catalyses the reaction a purine D-ribonucleoside + phosphate = a purine nucleobase + alpha-D-ribose 1-phosphate. It carries out the reaction a purine 2'-deoxy-D-ribonucleoside + phosphate = a purine nucleobase + 2-deoxy-alpha-D-ribose 1-phosphate. Functionally, catalyzes the reversible phosphorolytic breakdown of the N-glycosidic bond in the beta-(deoxy)ribonucleoside molecules, with the formation of the corresponding free purine bases and pentose-1-phosphate. This is Purine nucleoside phosphorylase DeoD-type from Erwinia tasmaniensis (strain DSM 17950 / CFBP 7177 / CIP 109463 / NCPPB 4357 / Et1/99).